Consider the following 405-residue polypeptide: MKSSKNDTFVYRTWFKTLVVYFVMFVMSAVVPITAMFPNLGYPCYFNALVDYGALNLTNYNLAHHLTPTLYLEPPEMFVYITLVFIADCVAFIYYACGEVALIKARKKVSGLTDLSAWVSAVGSPTVLFLAILKLWSIQVFIQVLSYKHVFLSAFVYFLHFLASVLHACACVTRFSPVWVVKAQDNSIPQDTFLWWVVFYLKPIVTNLYLGCLALETLVFSLSVFLALGNSFYFMVGDMVLGAVNLFLVLPIFWYILTEVWLASFLRHNFGFYCGMFIASIILILPLVRYEAVFVSAKLHTTVAINVAIIPILCSVAMLIRICRIFKSMRQGTDYVPVSETVELELESEPRPRPSRTPSPGRNRRRSSTSSSSSRSTRRQRPVSTQALISSVLPMTTDSEEEIFP.

Residues M1–T17 are Intravirion-facing. A helical transmembrane segment spans residues L18–P38. Residues N39–E76 lie on the Virion surface side of the membrane. The chain crosses the membrane as a helical span at residues M77–C97. The Intravirion segment spans residues G98–A121. Residues V122–I142 form a helical membrane-spanning segment. At Q143–H149 the chain is on the virion surface side. A helical membrane pass occupies residues V150 to A170. The Intravirion portion of the chain corresponds to C171–T192. A helical transmembrane segment spans residues F193–L215. Over E216–N245 the chain is Virion surface. A helical membrane pass occupies residues L246 to L266. Position 267 (R267) is a topological domain, intravirion. Residues H268–V288 form a helical membrane-spanning segment. At R289–L299 the chain is on the virion surface side. A helical membrane pass occupies residues H300–I320. At R321–P405 the chain is on the intravirion side. Residues L346 to P405 form a disordered region. Residues Q386–T397 show a composition bias toward polar residues.

It belongs to the herpesviridae glycoprotein M family. In terms of assembly, interacts (via N-terminus) with gN (via N-terminus). The gM-gN heterodimer forms the gCII complex.

The protein resides in the virion membrane. Its subcellular location is the host Golgi apparatus. It localises to the host trans-Golgi network. It is found in the host endosome membrane. The protein localises to the host nucleus inner membrane. Its function is as follows. Envelope glycoprotein important for virion assembly and egress. Plays a role in the correct incorporation of gH-gL into virion membrane. Directs the glycoprotein N (gN) to the host trans-Golgi network. The sequence is that of Envelope glycoprotein M from Homo sapiens (Human).